The chain runs to 329 residues: Fructose-1,6-bisphosphatase class 1 2 (329 aa).

Mg(2+)-binding residues include E92, D111, L113, and D114. Substrate is bound by residues 114–117 (DGSS) and N206. E278 is a binding site for Mg(2+).

It belongs to the FBPase class 1 family. Homotetramer. Mg(2+) is required as a cofactor.

The protein localises to the cytoplasm. It catalyses the reaction beta-D-fructose 1,6-bisphosphate + H2O = beta-D-fructose 6-phosphate + phosphate. Its pathway is carbohydrate biosynthesis; gluconeogenesis. The polypeptide is Fructose-1,6-bisphosphatase class 1 2 (Xanthobacter autotrophicus (strain ATCC BAA-1158 / Py2)).